Here is an 872-residue protein sequence, read N- to C-terminus: DNA mismatch repair protein MutS (872 aa).

Residue 626 to 633 (GPNMAGKS) participates in ATP binding.

It belongs to the DNA mismatch repair MutS family.

Its function is as follows. This protein is involved in the repair of mismatches in DNA. It is possible that it carries out the mismatch recognition step. This protein has a weak ATPase activity. This Chlorobium phaeobacteroides (strain DSM 266 / SMG 266 / 2430) protein is DNA mismatch repair protein MutS.